The chain runs to 379 residues: Cytochrome b (379 aa).

4 helical membrane passes run 33–53 (FGSL…FLAM), 77–98 (WLIR…YLHI), 113–133 (WNIG…GYVL), and 178–198 (FFAF…IHFF). Heme b contacts are provided by His83 and His97. His182 and His196 together coordinate heme b. His201 is an a ubiquinone binding site. 4 consecutive transmembrane segments (helical) span residues 226–246 (IKDI…VLFS), 288–308 (LGGV…PMLH), 320–340 (FSQC…WIGG), and 347–367 (YITI…IVSR).

This sequence belongs to the cytochrome b family. The cytochrome bc1 complex contains 11 subunits: 3 respiratory subunits (MT-CYB, CYC1 and UQCRFS1), 2 core proteins (UQCRC1 and UQCRC2) and 6 low-molecular weight proteins (UQCRH/QCR6, UQCRB/QCR7, UQCRQ/QCR8, UQCR10/QCR9, UQCR11/QCR10 and a cleavage product of UQCRFS1). This cytochrome bc1 complex then forms a dimer. Requires heme b as cofactor.

It is found in the mitochondrion inner membrane. Its function is as follows. Component of the ubiquinol-cytochrome c reductase complex (complex III or cytochrome b-c1 complex) that is part of the mitochondrial respiratory chain. The b-c1 complex mediates electron transfer from ubiquinol to cytochrome c. Contributes to the generation of a proton gradient across the mitochondrial membrane that is then used for ATP synthesis. The chain is Cytochrome b (MT-CYB) from Dolichotis patagonum (Patagonian mara).